A 225-amino-acid chain; its full sequence is Small ribosomal subunit protein uS5 (225 aa).

One can recognise an S5 DRBM domain in the interval Leu57 to Val120.

This sequence belongs to the universal ribosomal protein uS5 family. Part of the 30S ribosomal subunit. Contacts protein S4.

With S4 and S12 plays an important role in translational accuracy. This is Small ribosomal subunit protein uS5 from Methanococcus vannielii (strain ATCC 35089 / DSM 1224 / JCM 13029 / OCM 148 / SB).